The following is a 339-amino-acid chain: Glycerol-3-phosphate dehydrogenase [NAD(P)+] (339 aa).

Residues S15, Y16, H36, and K110 each contribute to the NADPH site. Sn-glycerol 3-phosphate-binding residues include K110, G139, and T141. A143 provides a ligand contact to NADPH. Positions 195, 248, 258, 259, and 260 each coordinate sn-glycerol 3-phosphate. Catalysis depends on K195, which acts as the Proton acceptor. Position 259 (R259) interacts with NADPH. Residues V283 and E285 each coordinate NADPH.

Belongs to the NAD-dependent glycerol-3-phosphate dehydrogenase family.

The protein localises to the cytoplasm. The catalysed reaction is sn-glycerol 3-phosphate + NAD(+) = dihydroxyacetone phosphate + NADH + H(+). The enzyme catalyses sn-glycerol 3-phosphate + NADP(+) = dihydroxyacetone phosphate + NADPH + H(+). It participates in membrane lipid metabolism; glycerophospholipid metabolism. Its function is as follows. Catalyzes the reduction of the glycolytic intermediate dihydroxyacetone phosphate (DHAP) to sn-glycerol 3-phosphate (G3P), the key precursor for phospholipid synthesis. The chain is Glycerol-3-phosphate dehydrogenase [NAD(P)+] from Pectobacterium carotovorum subsp. carotovorum (strain PC1).